Consider the following 518-residue polypeptide: Membrane-bound lytic murein transglycosylase F (518 aa).

The first 21 residues, 1–21 (MKKLKINYLFIGILALLLAVA), serve as a signal peptide directing secretion. Positions 22-269 (LWPSIPWFGK…RIEEKYLGHG (248 aa)) are non-LT domain. The tract at residues 270–518 (DDFDYVDTRT…SRKGSEEKQN (249 aa)) is LT domain. Glu314 is an active-site residue.

In the N-terminal section; belongs to the bacterial solute-binding protein 3 family. It in the C-terminal section; belongs to the transglycosylase Slt family.

The protein localises to the cell outer membrane. The enzyme catalyses Exolytic cleavage of the (1-&gt;4)-beta-glycosidic linkage between N-acetylmuramic acid (MurNAc) and N-acetylglucosamine (GlcNAc) residues in peptidoglycan, from either the reducing or the non-reducing ends of the peptidoglycan chains, with concomitant formation of a 1,6-anhydrobond in the MurNAc residue.. In terms of biological role, murein-degrading enzyme that degrades murein glycan strands and insoluble, high-molecular weight murein sacculi, with the concomitant formation of a 1,6-anhydromuramoyl product. Lytic transglycosylases (LTs) play an integral role in the metabolism of the peptidoglycan (PG) sacculus. Their lytic action creates space within the PG sacculus to allow for its expansion as well as for the insertion of various structures such as secretion systems and flagella. The polypeptide is Membrane-bound lytic murein transglycosylase F (Escherichia coli O6:H1 (strain CFT073 / ATCC 700928 / UPEC)).